A 426-amino-acid polypeptide reads, in one-letter code: Chaperone SurA (426 aa).

Residues 1–13 (MLGALFLGTAANA) form the signal peptide. 2 PpiC domains span residues 164 to 265 (SEEL…KLLE) and 274 to 373 (RDEV…EVLG).

The protein localises to the periplasm. It carries out the reaction [protein]-peptidylproline (omega=180) = [protein]-peptidylproline (omega=0). Chaperone involved in the correct folding and assembly of outer membrane proteins. Recognizes specific patterns of aromatic residues and the orientation of their side chains, which are found more frequently in integral outer membrane proteins. May act in both early periplasmic and late outer membrane-associated steps of protein maturation. This chain is Chaperone SurA, found in Pseudomonas fluorescens (strain Pf0-1).